The following is a 426-amino-acid chain: MHEYIIQGGFPVNGTIKASGNKNAALPCIAAAILSEEPIILKNIPEIEDVFVMLQVFEALGGHYEKIEKNVFKLQIEKVKTSKIPEDLATKIRASILFAGPLLARTGKAVLPPPGGDVIGRRRLDTHFLALTELGARVETDQNFSFIAHKLMGEDIFLDEASVTATENAIMAASLAEGTTIISNAASEPHVQELCKMLNKMGAKISGVGSNILTIEGVKKLNGTEHRIGPDYMEIGSFIGLAAVTRGQLKITDVEPRDMRPLRVAFGKLGIGWSLEGTTLTVPDKQKMQVNCDLGGMIPKIDDAPWPGFPPDLTSIMTVIATQVEGTVLIHEKMFESRMFFVDKLIGMGARITLCDPHRAVISGPSSLHGSELVSPDVRAGMAMVIAACCARGESIIRNVYQIERGYEHLVERLKSIGVKIELKEK.

22-23 provides a ligand contact to phosphoenolpyruvate; it reads KN. R93 is a UDP-N-acetyl-alpha-D-glucosamine binding site. The active-site Proton donor is the D117. UDP-N-acetyl-alpha-D-glucosamine contacts are provided by D312 and M334.

The protein belongs to the EPSP synthase family. MurA subfamily.

Its subcellular location is the cytoplasm. It carries out the reaction phosphoenolpyruvate + UDP-N-acetyl-alpha-D-glucosamine = UDP-N-acetyl-3-O-(1-carboxyvinyl)-alpha-D-glucosamine + phosphate. It functions in the pathway cell wall biogenesis; peptidoglycan biosynthesis. Functionally, cell wall formation. Adds enolpyruvyl to UDP-N-acetylglucosamine. This chain is UDP-N-acetylglucosamine 1-carboxyvinyltransferase, found in Treponema denticola (strain ATCC 35405 / DSM 14222 / CIP 103919 / JCM 8153 / KCTC 15104).